A 934-amino-acid chain; its full sequence is Bifunctional uridylyltransferase/uridylyl-removing enzyme (934 aa).

A uridylyltransferase region spans residues 1-379 (MSAHDLKLEE…TFSRRKRKLS (379 aa)). Positions 380–736 (DDGAFISENH…AKPHAFEAVT (357 aa)) are uridylyl-removing. The 118-residue stretch at 496–613 (VDEHLLRCIA…IDFADTVQTM (118 aa)) folds into the HD domain. 2 consecutive ACT domains span residues 737–818 (EITV…DMLA) and 848–931 (VIEV…RSPQ).

Belongs to the GlnD family. Requires Mg(2+) as cofactor.

It carries out the reaction [protein-PII]-L-tyrosine + UTP = [protein-PII]-uridylyl-L-tyrosine + diphosphate. The enzyme catalyses [protein-PII]-uridylyl-L-tyrosine + H2O = [protein-PII]-L-tyrosine + UMP + H(+). Its activity is regulated as follows. Uridylyltransferase (UTase) activity is inhibited by glutamine, while glutamine activates uridylyl-removing (UR) activity. Its function is as follows. Modifies, by uridylylation and deuridylylation, the PII regulatory proteins (GlnB and homologs), in response to the nitrogen status of the cell that GlnD senses through the glutamine level. Under low glutamine levels, catalyzes the conversion of the PII proteins and UTP to PII-UMP and PPi, while under higher glutamine levels, GlnD hydrolyzes PII-UMP to PII and UMP (deuridylylation). Thus, controls uridylylation state and activity of the PII proteins, and plays an important role in the regulation of nitrogen assimilation and metabolism. In Brucella melitensis biotype 2 (strain ATCC 23457), this protein is Bifunctional uridylyltransferase/uridylyl-removing enzyme.